The following is a 1637-amino-acid chain: Kinesin-like protein KIF21B (1637 aa).

Residues 8-370 (CVKVAVRIRP…LKYANRARNI (363 aa)) form the Kinesin motor domain. 87-94 (GQTGAGKT) contributes to the ATP binding site. Coiled coils occupy residues 376-604 (VNQD…EEEG) and 631-824 (NFQA…ALRR). Residues 400-1099 (MEYKAGKRVI…LQALIYNVQQ (700 aa)) are interaction with TRIM3. Residues 509–533 (ASARSPYSLGASPAAPAFGGSPASS) are compositionally biased toward low complexity. Disordered stretches follow at residues 509–538 (ASAR…EDAS) and 552–628 (KKKE…PEEK). Positions 578–627 (NSEETDENEAEEEEEERDESGCEEEEGREDEDEDSGSEESLVDSDSDPEE) are enriched in acidic residues. Position 579 is a phosphoserine (Ser579). Residue Thr582 is modified to Phosphothreonine. 2 disordered regions span residues 830-865 (SERV…GARS) and 880-906 (FLGD…GASQ). Residues 846-865 (SGAEVSASTTSSEAESGARS) show a composition bias toward low complexity. Residues 928–1016 (MQRMTIVNLE…EETKEELDST (89 aa)) adopt a coiled-coil conformation. 3 positions are modified to phosphoserine: Ser1149, Ser1167, and Ser1215. Polar residues predominate over residues 1194–1217 (RTVSLPTRGSTFPRQSRATETSPL). The disordered stretch occupies residues 1194 to 1251 (RTVSLPTRGSTFPRQSRATETSPLTRRKSYDRGQPIRSTDVGFTPPSSPPTRPRNDRN). Thr1237 bears the Phosphothreonine mark. At Ser1241 the chain carries Phosphoserine. 7 WD repeats span residues 1306-1343 (GHTK…EIAA), 1346-1384 (GHPN…KCIR), 1410-1448 (QGEH…PVGK), 1451-1493 (GHIG…TGTI), 1502-1539 (PHYD…LIQQ), 1543-1582 (AHKD…PIGE), and 1585-1622 (GHDS…TPCL).

The protein belongs to the TRAFAC class myosin-kinesin ATPase superfamily. Kinesin family. As to quaternary structure, interacts with TRIM3; the interaction positively affects motility of KIF21B. Interacts with GABARAP and GABA(A) receptor subunits: GABRG2, GABRA1 and GABRA2. May interact with GABA(A) receptor subunits: GABRB2 and GABRB3.

It is found in the cytoplasm. The protein resides in the cytoskeleton. It localises to the cell projection. The protein localises to the dendrite. Its subcellular location is the growth cone. It is found in the axon. The protein resides in the cytoplasmic vesicle. Plus-end directed microtubule-dependent motor protein which displays processive activity. Is involved in regulation of microtubule dynamics, synapse function and neuronal morphology, including dendritic tree branching and spine formation. Plays a role in lerning and memory. Involved in delivery of gamma-aminobutyric acid (GABA(A)) receptor to cell surface. In Homo sapiens (Human), this protein is Kinesin-like protein KIF21B (KIF21B).